The chain runs to 372 residues: Envelope phospholipase OPG057 (372 aa).

The short motif at 153-156 (YPPL) is the YPPL element. S-palmitoyl cysteine; by host attachment occurs at residues Cys185 and Cys186. The 28-residue stretch at 307 to 334 (FTIQNNTKLLIVDDEYVHITSANFDGTH) folds into the PLD phosphodiesterase domain.

This sequence belongs to the orthopoxvirus OPG057 family. Interacts with protein OPG190. Post-translationally, palmitoylated. Attachment of the palmitate moiety is essential for correct intracellular targeting and protein function.

It is found in the virion membrane. It localises to the host Golgi apparatus. Its subcellular location is the host trans-Golgi network. The protein localises to the host endoplasmic reticulum membrane. The catalysed reaction is a 1,2-diacyl-sn-glycero-3-phosphocholine + H2O = a 1,2-diacyl-sn-glycero-3-phosphate + choline + H(+). In terms of biological role, major envelope protein that plays a role in the biogenesis of the viral double membrane and in egress of virus from the host cell. Produces the wrapped form of virus that is required for cell-to-cell spread. Acts as a lipase with broad specificity including phospholipase C, phospholipase A, and triacylglycerol lipase activities. This is Envelope phospholipase OPG057 (OPG057) from Homo sapiens (Human).